Consider the following 392-residue polypeptide: Selenide, water dikinase 1 (392 aa).

Cysteine 31 is an active-site residue. ATP-binding positions include lysine 32, 67-69 (GMD), aspartate 87, aspartate 110, and 161-164 (GGQT). Aspartate 69 contributes to the Mg(2+) binding site. Aspartate 110 contributes to the Mg(2+) binding site. Aspartate 265 provides a ligand contact to Mg(2+). Position 387 is a phosphothreonine (threonine 387).

This sequence belongs to the selenophosphate synthase 1 family. Class II subfamily. In terms of assembly, homodimer. The cofactor is Mg(2+).

The protein resides in the cell membrane. Its subcellular location is the nucleus membrane. The enzyme catalyses hydrogenselenide + ATP + H2O = selenophosphate + AMP + phosphate + 2 H(+). In terms of biological role, synthesizes selenophosphate from selenide and ATP. This is Selenide, water dikinase 1 (sephs1) from Danio rerio (Zebrafish).